A 408-amino-acid polypeptide reads, in one-letter code: Protein EcsB (408 aa).

9 helical membrane passes run 30–50 (HLVI…SKWI), 53–73 (IPAH…VLTS), 111–131 (LFPL…VTPG), 134–154 (LVSY…NQVM), 180–200 (LVLY…YVIM), 284–304 (YLGI…YVSA), 308–328 (IAAV…LPLF), 351–371 (YFSL…VASA), and 374–394 (AGLT…FVVL).

It localises to the cell membrane. Presumed to form part of an ABC-transporter, it may form a transport channel. This chain is Protein EcsB (ecsB), found in Bacillus subtilis (strain 168).